The chain runs to 307 residues: NAD kinase (307 aa).

The active-site Proton acceptor is aspartate 85. Residues 85–86 (DG), arginine 90, 159–160 (NE), aspartate 189, and 200–205 (TAYAFS) contribute to the NAD(+) site.

This sequence belongs to the NAD kinase family. The cofactor is a divalent metal cation.

The protein resides in the cytoplasm. It carries out the reaction NAD(+) + ATP = ADP + NADP(+) + H(+). Involved in the regulation of the intracellular balance of NAD and NADP, and is a key enzyme in the biosynthesis of NADP. Catalyzes specifically the phosphorylation on 2'-hydroxyl of the adenosine moiety of NAD to yield NADP. The polypeptide is NAD kinase (Mycobacterium bovis (strain ATCC BAA-935 / AF2122/97)).